The chain runs to 593 residues: Capsid protein 1 (593 aa).

It belongs to the NCLDV major capsid protein family.

It localises to the virion. This chain is Capsid protein 1, found in Acanthamoeba polyphaga mimivirus (APMV).